A 355-amino-acid chain; its full sequence is Peptide chain release factor 1 (355 aa).

Glutamine 231 carries the post-translational modification N5-methylglutamine. The span at 281–291 shows a compositional bias: basic and acidic residues; sequence ERLAKESEARK. The interval 281–302 is disordered; it reads ERLAKESEARKSQVGSGDRSER.

The protein belongs to the prokaryotic/mitochondrial release factor family. In terms of processing, methylated by PrmC. Methylation increases the termination efficiency of RF1.

Its subcellular location is the cytoplasm. Its function is as follows. Peptide chain release factor 1 directs the termination of translation in response to the peptide chain termination codons UAG and UAA. The polypeptide is Peptide chain release factor 1 (Campylobacter jejuni subsp. doylei (strain ATCC BAA-1458 / RM4099 / 269.97)).